A 938-amino-acid polypeptide reads, in one-letter code: Isoleucine--tRNA ligase (938 aa).

Residues 58 to 68 carry the 'HIGH' region motif; that stretch reads PYANGSIHIGH. N6-acetyllysine is present on lysine 183. Glutamate 561 is a binding site for L-isoleucyl-5'-AMP. A 'KMSKS' region motif is present at residues 602-606; it reads KMSKS. Lysine 605 provides a ligand contact to ATP. Residues cysteine 901, cysteine 904, cysteine 921, and cysteine 924 each contribute to the Zn(2+) site.

The protein belongs to the class-I aminoacyl-tRNA synthetase family. IleS type 1 subfamily. Monomer. Zn(2+) is required as a cofactor.

The protein resides in the cytoplasm. The catalysed reaction is tRNA(Ile) + L-isoleucine + ATP = L-isoleucyl-tRNA(Ile) + AMP + diphosphate. Its function is as follows. Catalyzes the attachment of isoleucine to tRNA(Ile). As IleRS can inadvertently accommodate and process structurally similar amino acids such as valine, to avoid such errors it has two additional distinct tRNA(Ile)-dependent editing activities. One activity is designated as 'pretransfer' editing and involves the hydrolysis of activated Val-AMP. The other activity is designated 'posttransfer' editing and involves deacylation of mischarged Val-tRNA(Ile). The protein is Isoleucine--tRNA ligase of Shigella dysenteriae serotype 1 (strain Sd197).